The following is an 886-amino-acid chain: cytokinesis protein 3 (886 aa).

Residues 6-67 (QLPCMVRALY…PSNFVHCLDI (62 aa)) form the SH3 domain. The span at 72–88 (PGSSMSRTSASSFRYSS) shows a compositional bias: low complexity. The segment at 72-189 (PGSSMSRTSA…DLSRSTPSPL (118 aa)) is disordered. The span at 89–104 (PQKSSIDTPITSSDQG) shows a compositional bias: polar residues. Residues 135–154 (LNSLGSSLSLKKSVSRPPSS) show a composition bias toward low complexity. Over residues 155–188 (MSRTNLDVSSRWDNTADNDSQIDAQDLSRSTPSP) the composition is skewed to polar residues. Phosphoserine is present on S213. Disordered stretches follow at residues 219–290 (TKST…SPSD) and 358–393 (RRGSSKRKPSLQPTPPVSYPAHNVPQKGVRPASPHT). Residues 253-264 (DNSSKPRTSLQP) show a composition bias toward polar residues.

The protein belongs to the CYK3 family.

It is found in the cell tip. Involved in cytokinesis. The protein is cytokinesis protein 3 (cyk3) of Schizosaccharomyces pombe (strain 972 / ATCC 24843) (Fission yeast).